A 324-amino-acid polypeptide reads, in one-letter code: MQSSGLLKPRIIDVQSVSPVQAKVVMEPFERGYGHTLGNALRRILLSSMVGYAPTEVGIDGVLHEYSTVDGVQEDVVDILLNLKGVVFKLHNRDVVNLKLVKEGEGAVRAGDIELPHDVEIINPEHVIAHLSPGGKLAMEIKVEKGRGYVPGNVRNLGDAKTIGKLVLDASFSPIRRVAYAVESARVEQRTDLDKLIVDIETNGVVEPEEAIRYAARVLMEQLSVFADLEGTAPVAEASKPAQVDPVLLRPVDDLELTVRSANCLKAENIYYIGDLIQRTENELLKTPNLGRKSLNEIKEVLAARGLTLGMKLENWPPAGLEKA.

An alpha N-terminal domain (alpha-NTD) region spans residues 1–230 (MQSSGLLKPR…EQLSVFADLE (230 aa)). The tract at residues 244 to 324 (VDPVLLRPVD…NWPPAGLEKA (81 aa)) is alpha C-terminal domain (alpha-CTD).

The protein belongs to the RNA polymerase alpha chain family. As to quaternary structure, homodimer. The RNAP catalytic core consists of 2 alpha, 1 beta, 1 beta' and 1 omega subunit. When a sigma factor is associated with the core the holoenzyme is formed, which can initiate transcription.

The catalysed reaction is RNA(n) + a ribonucleoside 5'-triphosphate = RNA(n+1) + diphosphate. Functionally, DNA-dependent RNA polymerase catalyzes the transcription of DNA into RNA using the four ribonucleoside triphosphates as substrates. This chain is DNA-directed RNA polymerase subunit alpha, found in Dechloromonas aromatica (strain RCB).